A 459-amino-acid chain; its full sequence is Argininosuccinate lyase (459 aa).

Belongs to the lyase 1 family. Argininosuccinate lyase subfamily.

Its subcellular location is the cytoplasm. It catalyses the reaction 2-(N(omega)-L-arginino)succinate = fumarate + L-arginine. It functions in the pathway amino-acid biosynthesis; L-arginine biosynthesis; L-arginine from L-ornithine and carbamoyl phosphate: step 3/3. The protein is Argininosuccinate lyase of Chromobacterium violaceum (strain ATCC 12472 / DSM 30191 / JCM 1249 / CCUG 213 / NBRC 12614 / NCIMB 9131 / NCTC 9757 / MK).